The sequence spans 468 residues: UDP-N-acetylmuramoyl-L-alanine--L-glutamate ligase (468 aa).

122–128 (GTKGKST) is a binding site for ATP.

The protein belongs to the MurCDEF family. MurD2 subfamily.

It localises to the cytoplasm. It catalyses the reaction UDP-N-acetyl-alpha-D-muramoyl-L-alanine + L-glutamate + ATP = UDP-N-acetyl-alpha-D-muramoyl-L-alanyl-L-glutamate + ADP + phosphate + H(+). Its pathway is cell wall biogenesis; peptidoglycan biosynthesis. Functionally, cell wall formation. Catalyzes the addition of L-glutamate to the nucleotide precursor UDP-N-acetylmuramoyl-L-alanine. The protein is UDP-N-acetylmuramoyl-L-alanine--L-glutamate ligase of Xanthomonas euvesicatoria pv. vesicatoria (strain 85-10) (Xanthomonas campestris pv. vesicatoria).